We begin with the raw amino-acid sequence, 157 residues long: Probable succinate transporter subunit YjjB (157 aa).

4 consecutive transmembrane segments (helical) span residues 2-22 (GIIS…IPAV), 55-75 (AGFN…SIGI), 87-107 (IFTV…TAMI), and 129-149 (FLKA…PGLW).

It belongs to the ThrE exporter (TC 2.A.79) family. As to quaternary structure, the transporter is composed of YjjB and YjjP.

The protein localises to the cell inner membrane. Involved in succinate export with YjjP. Both proteins are required for export. This is Probable succinate transporter subunit YjjB from Klebsiella pneumoniae subsp. pneumoniae (strain ATCC 700721 / MGH 78578).